A 505-amino-acid polypeptide reads, in one-letter code: Ribose import ATP-binding protein RbsA 2 (505 aa).

ABC transporter domains follow at residues Leu13–Asp249 and Val259–Ala503. Residue Gly45–Ser52 coordinates ATP.

Belongs to the ABC transporter superfamily. Ribose importer (TC 3.A.1.2.1) family. As to quaternary structure, the complex is composed of an ATP-binding protein (RbsA), two transmembrane proteins (RbsC) and a solute-binding protein (RbsB).

It is found in the cell membrane. It carries out the reaction D-ribose(out) + ATP + H2O = D-ribose(in) + ADP + phosphate + H(+). Functionally, part of the ABC transporter complex RbsABC involved in ribose import. Responsible for energy coupling to the transport system. This chain is Ribose import ATP-binding protein RbsA 2, found in Streptomyces avermitilis (strain ATCC 31267 / DSM 46492 / JCM 5070 / NBRC 14893 / NCIMB 12804 / NRRL 8165 / MA-4680).